Here is a 490-residue protein sequence, read N- to C-terminus: Betaine aldehyde dehydrogenase (490 aa).

3 residues coordinate K(+): Thr26, Ile27, and Asp93. 150–152 serves as a coordination point for NAD(+); sequence GAW. The active-site Charge relay system is Lys162. 176–179 provides a ligand contact to NAD(+); the sequence is KPSE. Val180 contacts K(+). 230–233 contributes to the NAD(+) binding site; the sequence is GVAS. Residue Leu246 participates in K(+) binding. Glu252 acts as the Proton acceptor in catalysis. Positions 254, 286, and 387 each coordinate NAD(+). Catalysis depends on Cys286, which acts as the Nucleophile. Cys286 is subject to Cysteine sulfenic acid (-SOH). Positions 457 and 460 each coordinate K(+). Catalysis depends on Glu464, which acts as the Charge relay system.

This sequence belongs to the aldehyde dehydrogenase family. In terms of assembly, dimer of dimers. Requires K(+) as cofactor.

The catalysed reaction is betaine aldehyde + NAD(+) + H2O = glycine betaine + NADH + 2 H(+). It participates in amine and polyamine biosynthesis; betaine biosynthesis via choline pathway; betaine from betaine aldehyde: step 1/1. In terms of biological role, involved in the biosynthesis of the osmoprotectant glycine betaine. Catalyzes the irreversible oxidation of betaine aldehyde to the corresponding acid. This chain is Betaine aldehyde dehydrogenase, found in Escherichia coli (strain SE11).